The following is a 307-amino-acid chain: DDRGK domain-containing protein 1 (307 aa).

The Lumenal segment spans residues methionine 1 to aspartate 2. Residues leucine 3–leucine 23 form a helical membrane-spanning segment. Topologically, residues glutamine 24–serine 307 are cytoplasmic. Composition is skewed to low complexity over residues glutamate 32–glycine 43 and arginine 54–alanine 83. A disordered region spans residues glutamate 32–lysine 162. The span at lysine 117–lysine 162 shows a compositional bias: basic and acidic residues.

Belongs to the DDRGK1 family. As to quaternary structure, interacts with Atg9; the interaction is transient.

It is found in the endoplasmic reticulum membrane. In terms of biological role, substrate adapter for ufmylation, the covalent attachment of the ubiquitin-like modifier UFM1 to substrate proteins. Required for ufmylation of Atg9; protects the nervous system during aging, possibly by stabilizing Atg9 and supporting its function. This chain is DDRGK domain-containing protein 1, found in Drosophila willistoni (Fruit fly).